The chain runs to 323 residues: Extracellular endo-alpha-(1-&gt;5)-L-arabinanase 1 (323 aa).

A signal peptide spans 1 to 32 (MKKKKTWKRFLHFSSAALAAGLIFTSAAPAEA). Residue aspartate 44 is the Proton acceptor of the active site. Aspartate 44 provides a ligand contact to substrate. Aspartate 107 lines the Ca(2+) pocket. Substrate is bound by residues glycine 125 and 160 to 163 (NAID). Glutamate 165 contacts Ca(2+). 180-182 (SFW) is a substrate binding site. Glutamate 215 functions as the Proton donor in the catalytic mechanism. Aspartate 287 lines the Ca(2+) pocket.

It belongs to the glycosyl hydrolase 43 family. It depends on Ca(2+) as a cofactor.

Its subcellular location is the secreted. It carries out the reaction Endohydrolysis of (1-&gt;5)-alpha-arabinofuranosidic linkages in (1-&gt;5)-arabinans.. It functions in the pathway glycan metabolism; L-arabinan degradation. Its function is as follows. Involved in the degradation of arabinan and is a key enzyme in the complete degradation of the plant cell wall. Catalyzes the internal cleavage of alpha-(1-&gt;5)-L-arabinofuranosyl residues of linear 1,5-alpha-L-arabinan and of branched sugar beet arabinan. It displays no activity against heavily substituted arabinans or a range of other polysaccharides (larch wood arabinogalactan, wheat arabinoxylan and p-nitrophenyl-alpha-L-arabinofuranoside). The enzyme activity is progressively reduced as alpha-(1-&gt;5)-chains become shorter or more highly substituted. The protein is Extracellular endo-alpha-(1-&gt;5)-L-arabinanase 1 (abnA) of Bacillus subtilis (strain 168).